Consider the following 262-residue polypeptide: Ribose-5-phosphate isomerase A (262 aa).

Substrate-binding positions include 33-36 (TGST), 89-92 (DGAD), and 102-105 (KGGG). Glutamate 111 acts as the Proton acceptor in catalysis. Lysine 129 is a substrate binding site.

Belongs to the ribose 5-phosphate isomerase family. In terms of assembly, homodimer.

The catalysed reaction is aldehydo-D-ribose 5-phosphate = D-ribulose 5-phosphate. It participates in carbohydrate degradation; pentose phosphate pathway; D-ribose 5-phosphate from D-ribulose 5-phosphate (non-oxidative stage): step 1/1. Functionally, catalyzes the reversible conversion of ribose-5-phosphate to ribulose 5-phosphate. The polypeptide is Ribose-5-phosphate isomerase A (Cereibacter sphaeroides (strain ATCC 17023 / DSM 158 / JCM 6121 / CCUG 31486 / LMG 2827 / NBRC 12203 / NCIMB 8253 / ATH 2.4.1.) (Rhodobacter sphaeroides)).